A 76-amino-acid polypeptide reads, in one-letter code: uncharacterized protein (76 aa).

This is an uncharacterized protein from Thermoproteus tenax virus 1 (strain KRA1) (TTV1).